The primary structure comprises 639 residues: MALFHIARYAGPEAAGQGDTDAEAGSRARVLLERLQNRARERQQREPELETTGTAGEGEAAAAGKRRRRPRRRRRVSGSATPNSEAPRAKRRKADKDVDAGRGEEAPEELSAGAEDPGANPQEDVQRPPAPGRVLGDFARRKTPKVQPFLPAWLAKPSCVKKSVTEDLTPIEDIPEVHPDLQKQLRANGITSYFPVQAAVIPALLESADHGFLIGRGGYQPSDLCVSAPTGSGKTLAFVIPVVQALLHRVVCHIRALVVLPTKELAQQVSKVFNIYTDTTPLRVALVTGQKSLAKEQESLVQKTADGFRCLADIVVATPGRLVDHIDQTPGFSLQQLRFLIIDEADRMIDSMHQSWLPRVVAAAFYSEGPTGSCALLQRTQPQALTAASTCVPQMPLQKLLFSATLTQDPEKLQRLGLYQPRLFSTRLGQQSPKDTAEVDENSGKYTFPVGLTHHYVPCRLSSKPLIVLHLVLRMSCSRALCFTNSRENSHRLYLLAQAFGGVSVAEFSSRYGPGQRKKILKQFEQGKIQLLISTDATARGIDVQGVELVINYDAPQYLRTYVHRVGRTARAGKTGQAFTLLLKVQERKFLQMVSEAGVPELTHHEIPRKLLQPLVARYETALSQLEKTVKEEQKLKAA.

The segment at 1–131 (MALFHIARYA…QEDVQRPPAP (131 aa)) is disordered. At A2 the chain carries N-acetylalanine. Residues 24 to 48 (AGSRARVLLERLQNRARERQQREPE) are compositionally biased toward basic and acidic residues. The segment covering 50–63 (ETTGTAGEGEAAAA) has biased composition (low complexity). Residues 64 to 76 (GKRRRRPRRRRRV) show a composition bias toward basic residues. Residue S79 is modified to Phosphoserine. Over residues 94–105 (ADKDVDAGRGEE) the composition is skewed to basic and acidic residues. The Q motif signature appears at 193–201 (YFPVQAAVI). The Helicase ATP-binding domain occupies 215–424 (GRGGYQPSDL…RLGLYQPRLF (210 aa)). 228 to 235 (APTGSGKT) contacts ATP. Positions 343–346 (DEAD) match the DEAD box motif. S432 carries the post-translational modification Phosphoserine. The Helicase C-terminal domain maps to 467–615 (IVLHLVLRMS…EIPRKLLQPL (149 aa)).

It belongs to the DEAD box helicase family. DDX51/DBP6 subfamily.

Its subcellular location is the nucleus. The protein localises to the nucleolus. It catalyses the reaction ATP + H2O = ADP + phosphate + H(+). Its function is as follows. ATP-binding RNA helicase involved in the biogenesis of 60S ribosomal subunits. The polypeptide is ATP-dependent RNA helicase DDX51 (Ddx51) (Mus musculus (Mouse)).